The chain runs to 414 residues: Serine hydroxymethyltransferase (414 aa).

(6S)-5,6,7,8-tetrahydrofolate-binding positions include Leu116 and Gly120–Leu122. Lys224 is modified (N6-(pyridoxal phosphate)lysine). (6S)-5,6,7,8-tetrahydrofolate contacts are provided by residues Glu240 and Ser348 to Phe350.

Belongs to the SHMT family. Homodimer. The cofactor is pyridoxal 5'-phosphate.

It is found in the cytoplasm. It catalyses the reaction (6R)-5,10-methylene-5,6,7,8-tetrahydrofolate + glycine + H2O = (6S)-5,6,7,8-tetrahydrofolate + L-serine. It participates in one-carbon metabolism; tetrahydrofolate interconversion. The protein operates within amino-acid biosynthesis; glycine biosynthesis; glycine from L-serine: step 1/1. Its function is as follows. Catalyzes the reversible interconversion of serine and glycine with tetrahydrofolate (THF) serving as the one-carbon carrier. This reaction serves as the major source of one-carbon groups required for the biosynthesis of purines, thymidylate, methionine, and other important biomolecules. Also exhibits THF-independent aldolase activity toward beta-hydroxyamino acids, producing glycine and aldehydes, via a retro-aldol mechanism. This Campylobacter fetus subsp. fetus (strain 82-40) protein is Serine hydroxymethyltransferase.